The sequence spans 130 residues: Glycine cleavage system H protein (130 aa).

Positions Thr-24 to Lys-106 constitute a Lipoyl-binding domain. Lys-65 is subject to N6-lipoyllysine.

This sequence belongs to the GcvH family. The glycine cleavage system is composed of four proteins: P, T, L and H. The cofactor is (R)-lipoate.

The glycine cleavage system catalyzes the degradation of glycine. The H protein shuttles the methylamine group of glycine from the P protein to the T protein. The protein is Glycine cleavage system H protein of Saccharophagus degradans (strain 2-40 / ATCC 43961 / DSM 17024).